A 664-amino-acid polypeptide reads, in one-letter code: DNA ligase (664 aa).

NAD(+)-binding positions include 30–34 (DFEFD), 79–80 (SL), and Glu-109. Lys-111 acts as the N6-AMP-lysine intermediate in catalysis. Residues Arg-132, Glu-169, Lys-284, and Lys-308 each coordinate NAD(+). Zn(2+) contacts are provided by Cys-403, Cys-406, Cys-421, and Cys-427. The region spanning 586 to 664 (NRSEKLKGLT…NEDAFLNMLE (79 aa)) is the BRCT domain.

This sequence belongs to the NAD-dependent DNA ligase family. LigA subfamily. Requires Mg(2+) as cofactor. It depends on Mn(2+) as a cofactor.

The catalysed reaction is NAD(+) + (deoxyribonucleotide)n-3'-hydroxyl + 5'-phospho-(deoxyribonucleotide)m = (deoxyribonucleotide)n+m + AMP + beta-nicotinamide D-nucleotide.. Functionally, DNA ligase that catalyzes the formation of phosphodiester linkages between 5'-phosphoryl and 3'-hydroxyl groups in double-stranded DNA using NAD as a coenzyme and as the energy source for the reaction. It is essential for DNA replication and repair of damaged DNA. This chain is DNA ligase, found in Parabacteroides distasonis (strain ATCC 8503 / DSM 20701 / CIP 104284 / JCM 5825 / NCTC 11152).